The following is a 276-amino-acid chain: Putative pyruvate, phosphate dikinase regulatory protein (276 aa).

152–159 (GISRTSKT) is a binding site for ADP.

It belongs to the pyruvate, phosphate/water dikinase regulatory protein family. PDRP subfamily.

It carries out the reaction N(tele)-phospho-L-histidyl/L-threonyl-[pyruvate, phosphate dikinase] + ADP = N(tele)-phospho-L-histidyl/O-phospho-L-threonyl-[pyruvate, phosphate dikinase] + AMP + H(+). The catalysed reaction is N(tele)-phospho-L-histidyl/O-phospho-L-threonyl-[pyruvate, phosphate dikinase] + phosphate + H(+) = N(tele)-phospho-L-histidyl/L-threonyl-[pyruvate, phosphate dikinase] + diphosphate. In terms of biological role, bifunctional serine/threonine kinase and phosphorylase involved in the regulation of the pyruvate, phosphate dikinase (PPDK) by catalyzing its phosphorylation/dephosphorylation. The chain is Putative pyruvate, phosphate dikinase regulatory protein from Staphylococcus carnosus (strain TM300).